Consider the following 537-residue polypeptide: MAVAAAAVAAPAGGGGARAQRSGLLEVLVRDRWHKVLVNLSEDALVLSCEEGAAAYNGIGAATNGSFCRGSGTGHPVPGVAQAPDSPAGVRTAFTDLPEQVPESISNQKRGVKVLKQELGGLGISIKGGKENKMPILISKIFKGLAADQTQALYVGDAILSVNGADLRDATHDEAVQALKRAGKEVLLEVKYMREATPYVKKGSPVSEIGWETPPPESPRLGGGSAEPLSSQSFSFHRDRKSIPLKMCYVTRNMTLADPENRQLEIHSPDAKHTVILRSKDSATAQAWFSAIHSNAGDLLTRVVADIREQLGKTGIAGSREIRHLGWLAEKVPGESEKQWKPALVVLTEKDLLIYDSMPRRKEAWFSPVHSYPLLATRLVHSGPGKGSPQAGMDLSFATRTGTKQGIETHLFRAEISRDLSHWTRSIVQGCHNSAELTAEITTACTYRNQECRLTIHYDNGFSISTEPQDGAFPKTIIQSPYEKLKMSSDDGIRMLYLDFGGKEGEIQLDLHSCPKPIVFIIHSFLSAKITRLGLVA.

Alanine 2 is modified (N-acetylalanine). 2 PH domains span residues 18–297 and 321–432; these read RAQR…SNAG and EIRH…QGCH. Serine 86, serine 125, and serine 204 each carry phosphoserine. Residues 111-194 enclose the PDZ domain; it reads GVKVLKQELG…EVLLEVKYMR (84 aa). The interval 204-233 is disordered; that stretch reads SPVSEIGWETPPPESPRLGGGSAEPLSSQS. A Phosphothreonine modification is found at threonine 213. Residues serine 218, serine 225, serine 231, serine 235, and serine 388 each carry the phosphoserine modification. An SU domain is found at 481 to 537; that stretch reads PYEKLKMSSDDGIRMLYLDFGGKEGEIQLDLHSCPKPIVFIIHSFLSAKITRLGLVA. The tract at residues 517-537 is calmodulin-binding; sequence PIVFIIHSFLSAKITRLGLVA.

The protein belongs to the syntrophin family. As to quaternary structure, monomer and homodimer. Interacts with the viral HTLV-1 TAX protein and other members of the syntrophin family: SNTA1 and SNTB2. Interacts with the dystrophin protein DMD and related proteins DTNA and UTRN and with the sodium channel proteins SCN4A and SCN5A. Interacts with DTNB. In terms of processing, phosphorylated by CaM-kinase II. As to expression, ubiquitous. Expressed at high levels in the liver.

It localises to the cell membrane. It is found in the sarcolemma. The protein localises to the cell junction. The protein resides in the cytoplasm. Its subcellular location is the cytoskeleton. Functionally, adapter protein that binds to and probably organizes the subcellular localization of a variety of membrane proteins. May link various receptors to the actin cytoskeleton and the dystrophin glycoprotein complex. The protein is Beta-1-syntrophin (Sntb1) of Mus musculus (Mouse).